The primary structure comprises 246 residues: MGTDAWDGKQAAPPRRARRWLRWLMAAPLLFAAASVLQVLILRVVDPPISSMMAGRYLEAWGEGDWSFSLHRQWRDYDKIAASLPISVVAAEDQQFPMHHGFDLQAIEKARDHNARGGRVRGASTISQQVAKNVFLWQGRSWVRKGLEAWYTVLIELFWPKQRILEMYLNVAEFGDGVYGAQAAAQQFWSKDAAGLSPSESARLAAVLPSPRRYDARRPGAFVQRRAGWIQRQARQLGGPAYLQAP.

A helical membrane pass occupies residues 20-42 (WLRWLMAAPLLFAAASVLQVLIL).

It belongs to the glycosyltransferase 51 family.

Its subcellular location is the cell inner membrane. It catalyses the reaction [GlcNAc-(1-&gt;4)-Mur2Ac(oyl-L-Ala-gamma-D-Glu-L-Lys-D-Ala-D-Ala)](n)-di-trans,octa-cis-undecaprenyl diphosphate + beta-D-GlcNAc-(1-&gt;4)-Mur2Ac(oyl-L-Ala-gamma-D-Glu-L-Lys-D-Ala-D-Ala)-di-trans,octa-cis-undecaprenyl diphosphate = [GlcNAc-(1-&gt;4)-Mur2Ac(oyl-L-Ala-gamma-D-Glu-L-Lys-D-Ala-D-Ala)](n+1)-di-trans,octa-cis-undecaprenyl diphosphate + di-trans,octa-cis-undecaprenyl diphosphate + H(+). Its pathway is cell wall biogenesis; peptidoglycan biosynthesis. In terms of biological role, peptidoglycan polymerase that catalyzes glycan chain elongation from lipid-linked precursors. This chain is Biosynthetic peptidoglycan transglycosylase, found in Xanthomonas axonopodis pv. citri (strain 306).